We begin with the raw amino-acid sequence, 1248 residues long: ATP-dependent helicase/nuclease subunit A (1248 aa).

In terms of domain architecture, UvrD-like helicase ATP-binding spans 4 to 480 (TKWTKEQYAA…ILLFKNFRSR (477 aa)). 25 to 32 (AAAGAGKT) is an ATP binding site. Positions 523-820 (ETVVGGAIEL…RLMSIHKSKG (298 aa)) constitute a UvrD-like helicase C-terminal domain.

It belongs to the helicase family. AddA subfamily. In terms of assembly, heterodimer of AddA and AddB/RexB. Requires Mg(2+) as cofactor.

It carries out the reaction Couples ATP hydrolysis with the unwinding of duplex DNA by translocating in the 3'-5' direction.. The enzyme catalyses ATP + H2O = ADP + phosphate + H(+). The heterodimer acts as both an ATP-dependent DNA helicase and an ATP-dependent, dual-direction single-stranded exonuclease. Recognizes the chi site generating a DNA molecule suitable for the initiation of homologous recombination. The AddA nuclease domain is required for chi fragment generation; this subunit has the helicase and 3' -&gt; 5' nuclease activities. This is ATP-dependent helicase/nuclease subunit A from Ruminiclostridium cellulolyticum (strain ATCC 35319 / DSM 5812 / JCM 6584 / H10) (Clostridium cellulolyticum).